The chain runs to 95 residues: Protein TusB (95 aa).

This sequence belongs to the DsrH/TusB family. Heterohexamer, formed by a dimer of trimers. The hexameric TusBCD complex contains 2 copies each of TusB, TusC and TusD. The TusBCD complex interacts with TusE.

It is found in the cytoplasm. Its function is as follows. Part of a sulfur-relay system required for 2-thiolation of 5-methylaminomethyl-2-thiouridine (mnm(5)s(2)U) at tRNA wobble positions. This is Protein TusB from Escherichia coli (strain K12 / MC4100 / BW2952).